The chain runs to 170 residues: ATP synthase subunit b (170 aa).

A helical transmembrane segment spans residues 22–41 (VLNWAVVVFGLYKFLPGFLG).

This sequence belongs to the ATPase B chain family. In terms of assembly, F-type ATPases have 2 components, F(1) - the catalytic core - and F(0) - the membrane proton channel. F(1) has five subunits: alpha(3), beta(3), gamma(1), delta(1), epsilon(1). F(0) has four main subunits: a(1), b(1), b'(1) and c(10-14). The alpha and beta chains form an alternating ring which encloses part of the gamma chain. F(1) is attached to F(0) by a central stalk formed by the gamma and epsilon chains, while a peripheral stalk is formed by the delta, b and b' chains.

It localises to the cellular thylakoid membrane. Functionally, f(1)F(0) ATP synthase produces ATP from ADP in the presence of a proton or sodium gradient. F-type ATPases consist of two structural domains, F(1) containing the extramembraneous catalytic core and F(0) containing the membrane proton channel, linked together by a central stalk and a peripheral stalk. During catalysis, ATP synthesis in the catalytic domain of F(1) is coupled via a rotary mechanism of the central stalk subunits to proton translocation. Its function is as follows. Component of the F(0) channel, it forms part of the peripheral stalk, linking F(1) to F(0). The chain is ATP synthase subunit b from Prochlorococcus marinus subsp. pastoris (strain CCMP1986 / NIES-2087 / MED4).